We begin with the raw amino-acid sequence, 228 residues long: MKVPIILVNFKVYETSYGRRGLEMAKIVEKVALETSTEIIIAVPATMITRVAESVTIPVYAQHVDGVPEGAHTGAVTPELIKDAGAKGSLLNHSERRVRMDEMDDALKRMKKLGLESVICVDRYELVAPMALLKPTAVLVEPPELIGTGVSVSKARPEVITSAVDEIRKVQGVYLIAGAGITSGEDVYVAMKLGSDGVGAASAIMKAKEPQKVLLDFVNGAIRALEER.

Residue 9 to 11 coordinates substrate; that stretch reads NFK. The active-site Electrophile is histidine 93. Glutamate 141 serves as the catalytic Proton acceptor. Residues isoleucine 146, glycine 180, and 201-202 contribute to the substrate site; that span reads AS.

It belongs to the triosephosphate isomerase family. As to quaternary structure, homotetramer; dimer of dimers.

It localises to the cytoplasm. It catalyses the reaction D-glyceraldehyde 3-phosphate = dihydroxyacetone phosphate. It functions in the pathway carbohydrate biosynthesis; gluconeogenesis. The protein operates within carbohydrate degradation; glycolysis; D-glyceraldehyde 3-phosphate from glycerone phosphate: step 1/1. Involved in the gluconeogenesis. Catalyzes stereospecifically the conversion of dihydroxyacetone phosphate (DHAP) to D-glyceraldehyde-3-phosphate (G3P). The chain is Triosephosphate isomerase from Metallosphaera sedula (strain ATCC 51363 / DSM 5348 / JCM 9185 / NBRC 15509 / TH2).